The sequence spans 1076 residues: JmjC domain-containing histone demethylation protein 1 (1076 aa).

A JmjC domain is found at 93–265; the sequence is FSQTPLEDLV…TQLRVYQVEN (173 aa). Residue Thr-159 coordinates substrate. His-162 and Asp-164 together coordinate Fe cation. Substrate is bound at residue Lys-179. Position 233 (His-233) interacts with Fe cation. Disordered stretches follow at residues 598 to 748 and 789 to 1056; these read FEEE…DPVV and KIEP…KIPS. Acidic residues predominate over residues 610-634; that stretch reads DQEEEEYDAEEPEDQEEEEEDEYQA. The span at 653–680 shows a compositional bias: basic and acidic residues; sequence AKNDESEEVSVKKDKKEKMEKVEKDEKR. Basic residues predominate over residues 681 to 698; that stretch reads RNSKSKKDKISKEKKKKE. Composition is skewed to basic and acidic residues over residues 699–714 and 789–811; these read RERI…ELRA and KIEP…EPEH. Residues 935 to 946 are compositionally biased toward low complexity; that stretch reads ASAPSSRHSSIS. 2 stretches are compositionally biased toward polar residues: residues 957–990 and 1004–1019; these read FNSS…SINR and DSLS…TYPT. Residues 1044–1056 show a composition bias toward basic and acidic residues; sequence QHHDDGHKHKIPS.

The protein belongs to the JHDM1 histone demethylase family. Requires Fe(2+) as cofactor.

The protein localises to the nucleus. It catalyses the reaction N(6),N(6)-dimethyl-L-lysyl(36)-[histone H3] + 2 2-oxoglutarate + 2 O2 = L-lysyl(36)-[histone H3] + 2 formaldehyde + 2 succinate + 2 CO2. Its function is as follows. Histone demethylase that specifically demethylates 'Lys-36' of histone H3, thereby playing a central role in histone code. Has a role in regulating lifespan. This is JmjC domain-containing histone demethylation protein 1 (jhdm-1) from Caenorhabditis elegans.